We begin with the raw amino-acid sequence, 402 residues long: Nodulation protein E (402 aa).

Residues 2–401 (DRRVVITGIG…GMNAVLAFRQ (400 aa)) enclose the Ketosynthase family 3 (KS3) domain. Catalysis depends on for beta-ketoacyl synthase activity residues C162, H294, and H331. The helical transmembrane segment at 329 to 348 (HAHCLGAASALEMIACVMAI) threads the bilayer.

The protein belongs to the thiolase-like superfamily. Beta-ketoacyl-ACP synthases family.

It is found in the cell inner membrane. Functionally, proposed to synthesize NOD factor fatty acyl chain. Involved in the synthesis of a highly unsaturated fatty acid moiety, which forms part of a lipo-oligosaccharide that is responsible for host specificity. This chain is Nodulation protein E (nodE), found in Rhizobium sp. (strain N33).